The chain runs to 357 residues: Tetraacyldisaccharide 4'-kinase (357 aa).

Position 49–56 (49–56) interacts with ATP; the sequence is TIGGTGKT.

The protein belongs to the LpxK family.

It carries out the reaction a lipid A disaccharide + ATP = a lipid IVA + ADP + H(+). It functions in the pathway glycolipid biosynthesis; lipid IV(A) biosynthesis; lipid IV(A) from (3R)-3-hydroxytetradecanoyl-[acyl-carrier-protein] and UDP-N-acetyl-alpha-D-glucosamine: step 6/6. Functionally, transfers the gamma-phosphate of ATP to the 4'-position of a tetraacyldisaccharide 1-phosphate intermediate (termed DS-1-P) to form tetraacyldisaccharide 1,4'-bis-phosphate (lipid IVA). The polypeptide is Tetraacyldisaccharide 4'-kinase (Porphyromonas gingivalis (strain ATCC BAA-308 / W83)).